A 258-amino-acid chain; its full sequence is Phosphate import ATP-binding protein PstB 3 (258 aa).

Residues 10–253 (MTARSLAVHY…PANSLTQGYI (244 aa)) form the ABC transporter domain. 42 to 49 (GPSGCGKS) serves as a coordination point for ATP.

It belongs to the ABC transporter superfamily. Phosphate importer (TC 3.A.1.7) family. As to quaternary structure, the complex is composed of two ATP-binding proteins (PstB), two transmembrane proteins (PstC and PstA) and a solute-binding protein (PstS).

It is found in the cell inner membrane. It catalyses the reaction phosphate(out) + ATP + H2O = ADP + 2 phosphate(in) + H(+). Functionally, part of the ABC transporter complex PstSACB involved in phosphate import. Responsible for energy coupling to the transport system. This is Phosphate import ATP-binding protein PstB 3 from Paramagnetospirillum magneticum (strain ATCC 700264 / AMB-1) (Magnetospirillum magneticum).